The following is a 695-amino-acid chain: uncharacterized protein (695 aa).

Disordered stretches follow at residues 1-112 (MSRL…KHKK) and 242-262 (MKKVSQQLKPQKNTNDSNNDH). The segment covering 32–47 (DSSSSSDSPNFFPSSS) has biased composition (low complexity). Residues 96–107 (KTEKEKEKEPIQ) are compositionally biased toward basic and acidic residues. Residues 278–492 (KPRTKLLLLG…KIDKEADTNH (215 aa)) form the tr-type G domain. GTP is bound by residues 287 to 294 (GPPKSGKK), 357 to 361 (IFTTN), and 417 to 420 (TKMD).

It belongs to the TRAFAC class translation factor GTPase superfamily. Classic translation factor GTPase family.

Its subcellular location is the cytoplasm. The protein resides in the nucleus. This is an uncharacterized protein from Schizosaccharomyces pombe (strain 972 / ATCC 24843) (Fission yeast).